The chain runs to 72 residues: Small ribosomal subunit protein bS18 (72 aa).

This sequence belongs to the bacterial ribosomal protein bS18 family. In terms of assembly, part of the 30S ribosomal subunit. Forms a tight heterodimer with protein bS6.

Binds as a heterodimer with protein bS6 to the central domain of the 16S rRNA, where it helps stabilize the platform of the 30S subunit. The sequence is that of Small ribosomal subunit protein bS18 from Francisella tularensis subsp. holarctica (strain OSU18).